A 78-amino-acid polypeptide reads, in one-letter code: Conotoxin 1 (78 aa).

The first 22 residues, 1-22 (MKLTCMMFVAVLFLTASVFITA), serve as a signal peptide directing secretion. Residues 23-51 (DDSRNGIENLPRMRRHEMKNPKASKLNKR) constitute a propeptide that is removed on maturation. Gln-52 carries the post-translational modification Pyrrolidone carboxylic acid. Intrachain disulfides connect Cys-53-Cys-69, Cys-60-Cys-73, and Cys-68-Cys-77.

It belongs to the conotoxin O1 superfamily. Expressed by the venom duct.

The protein localises to the secreted. This chain is Conotoxin 1, found in Conus imperialis (Imperial cone).